Consider the following 415-residue polypeptide: MSRTRTTPGRRVESDVVDIGEHEFESGEILPDLKVAYEAYGEFDGQNAVLVCHGLTGSQHVAGHGTESGVSGQARAWWGDIVGPGKALDTNDYYVICVNVPGSCYGTSGPASEGPDGEPWGTDFPPVTVHDWTRAQRRLLDHLGVGRLHAVVGGSVGGMNALDWAVQFPDDVERLAVVASAARLDSQCLGIDAVARRAITSDPNWNGGDYYGEDRATPDAGLGLARQLGHLMYLSKDSMERKFGRRSAGRGDRGDAFPSDPAAAFFPYREVESYLDYQAEKFAERFDANSYLYLTRAMDDFDLSEGYESDAAALAAFEGESLLVSFTGDWHFTTEQSESLAGAFRRVDVPVAHHVVESDHGHDAFLVEPEKVGPPLGDFVDEGVAGRAVTDTATDGGEPDEEEDFAPVHSSLFSR.

Positions 47 to 369 (NAVLVCHGLT…HGHDAFLVEP (323 aa)) constitute an AB hydrolase-1 domain. Serine 155 functions as the Nucleophile in the catalytic mechanism. Arginine 226 is a substrate binding site. Residues aspartate 329 and histidine 362 contribute to the active site. Aspartate 363 is a binding site for substrate. Positions 387 to 415 (RAVTDTATDGGEPDEEEDFAPVHSSLFSR) are disordered.

The protein belongs to the AB hydrolase superfamily. MetX family. As to quaternary structure, homodimer.

It localises to the cytoplasm. The enzyme catalyses L-homoserine + acetyl-CoA = O-acetyl-L-homoserine + CoA. It functions in the pathway amino-acid biosynthesis; L-methionine biosynthesis via de novo pathway; O-acetyl-L-homoserine from L-homoserine: step 1/1. Transfers an acetyl group from acetyl-CoA to L-homoserine, forming acetyl-L-homoserine. This Haloferax prahovense (strain DSM 18310 / JCM 13924 / TL6) protein is Homoserine O-acetyltransferase.